The primary structure comprises 590 residues: MNLITPTIILTIMLSLMMSIMQPHNNTKNNLMVLFLISLIPINPLLNNNELTLTLTPLIISPTENINISITLDTASLLFTPIALFITWSITEFSLWYMATDPNINKFIKYLLTFLITMLVIITANNMYQLFIGWEGVGIMSFLLIGWWHGRQDANTAALQAIIYNRIGDIGLIMTTAWMMTTSSINMQELMIQHEVVNIIPLLGLVAAATGKSAQFSLHPWLPSAMEGPTPVSALLHSSTMVVAGVFLLIRLHPILHNNKIMLTCCLILGATTTMFAAAAATTYFDIKKIIALSTTSQLGLMMTMIGLNQPTLAFLHMITHSFFKAMLFLCSGSYIHNLNNEQDIRMMGGLLKTLPMTSSFLTIANLSLMGMPFLSGFYSKDTIIETLANSYTNSWAIMITMIATILSACYSTQIMLFTIMEHPRTHHTTHKETKNITHPLARLMLTSILMGTMTKMSTLQTTTMVTMPKTIKLMALISTIIGVLLSKDLTHMTHHMKPKKPNKQNMFFNQLAFFNIPHRTITINTLKISQQTSTELMDLWTLEVWGPKGLSNTITNTIHLLTQQKNMIKNYMAIFTMTTMTVLLFIMSK.

The next 15 helical transmembrane spans lie at 1 to 21 (MNLITPTIILTIMLSLMMSIM), 31 to 51 (LMVLFLISLIPINPLLNNNEL), 77 to 97 (LLFTPIALFITWSITEFSLWY), 104 to 124 (INKFIKYLLTFLITMLVIITA), 130 to 150 (LFIGWEGVGIMSFLLIGWWHG), 167 to 187 (IGDIGLIMTTAWMMTTSSINM), 190 to 210 (LMIQHEVVNIIPLLGLVAAAT), 230 to 250 (TPVSALLHSSTMVVAGVFLLI), 261 to 281 (IMLTCCLILGATTTMFAAAAA), 314 to 336 (AFLHMITHSFFKAMLFLCSGSYI), 355 to 375 (LPMTSSFLTIANLSLMGMPFL), 398 to 418 (IMITMIATILSACYSTQIMLF), 439 to 461 (HPLARLMLTSILMGTMTKMSTLQ), 466 to 486 (VTMPKTIKLMALISTIIGVLL), and 568 to 588 (MIKNYMAIFTMTTMTVLLFIM).

It belongs to the complex I subunit 5 family.

Its subcellular location is the mitochondrion inner membrane. It carries out the reaction a ubiquinone + NADH + 5 H(+)(in) = a ubiquinol + NAD(+) + 4 H(+)(out). Functionally, core subunit of the mitochondrial membrane respiratory chain NADH dehydrogenase (Complex I) that is believed to belong to the minimal assembly required for catalysis. Complex I functions in the transfer of electrons from NADH to the respiratory chain. The immediate electron acceptor for the enzyme is believed to be ubiquinone. The polypeptide is NADH-ubiquinone oxidoreductase chain 5 (MT-ND5) (Lycodon semicarinatus (Ryukyu odd-tooth snake)).